An 863-amino-acid polypeptide reads, in one-letter code: Paramyosin (863 aa).

The tract at residues Met1–Pro26 is nonhelical region. Positions Val27 to Ile836 form a coiled coil. The nonhelical region stretch occupies residues Gly837–Met863.

The protein belongs to the paramyosin family. Homodimer.

The protein localises to the cytoplasm. The protein resides in the myofibril. In terms of biological role, paramyosin is a major structural component of many thick filaments isolated from invertebrate muscles. This Echinococcus granulosus (Hydatid tapeworm) protein is Paramyosin.